The sequence spans 298 residues: Acidic endochitinase (298 aa).

An N-terminal signal peptide occupies residues 1-29 (MKPNMACLKQVSALLLPLLFISFFKPSHA). The 269-residue stretch at 30–298 (GGISVYWGQN…GYSGAIIGSV (269 aa)) folds into the GH18 domain. 2 cysteine pairs are disulfide-bonded: cysteine 49-cysteine 96 and cysteine 79-cysteine 86. The Proton donor role is filled by glutamate 156. Residues cysteine 185 and cysteine 214 are joined by a disulfide bond.

It belongs to the glycosyl hydrolase 18 family. Chitinase class II subfamily.

It is found in the secreted. Its subcellular location is the extracellular space. The catalysed reaction is Random endo-hydrolysis of N-acetyl-beta-D-glucosaminide (1-&gt;4)-beta-linkages in chitin and chitodextrins.. Functionally, this protein functions as a defense against chitin containing fungal pathogens. The sequence is that of Acidic endochitinase from Phaseolus angularis (Azuki bean).